The chain runs to 369 residues: S-(hydroxymethyl)glutathione dehydrogenase (369 aa).

7 residues coordinate Zn(2+): cysteine 40, histidine 62, cysteine 92, cysteine 95, cysteine 98, cysteine 106, and cysteine 169.

It belongs to the zinc-containing alcohol dehydrogenase family. Class-III subfamily. In terms of assembly, homodimer. Requires Zn(2+) as cofactor.

The protein localises to the cytoplasm. The enzyme catalyses S-(hydroxymethyl)glutathione + NADP(+) = S-formylglutathione + NADPH + H(+). It catalyses the reaction S-(hydroxymethyl)glutathione + NAD(+) = S-formylglutathione + NADH + H(+). The catalysed reaction is a primary alcohol + NAD(+) = an aldehyde + NADH + H(+). It carries out the reaction a secondary alcohol + NAD(+) = a ketone + NADH + H(+). The enzyme catalyses S-nitrosoglutathione + NADH + H(+) = S-(hydroxysulfenamide)glutathione + NAD(+). Has high formaldehyde dehydrogenase activity in the presence of glutathione and catalyzes the oxidation of normal alcohols in a reaction that is not GSH-dependent. In addition, hemithiolacetals other than those formed from GSH, including omega-thiol fatty acids, also are substrates. Also acts as a S-nitroso-glutathione reductase by catalyzing the NADH-dependent reduction of S-nitrosoglutathione. This chain is S-(hydroxymethyl)glutathione dehydrogenase (frmA), found in Escherichia coli O1:K1 / APEC.